The primary structure comprises 301 residues: MSTGLTANNGIEEFGTIAVAMVTPFDANGALDIKAGQKLAAHLVSNGIDSLVLAGTTGESPTTSLEEKIDLLKAVKAEVGDSAKLIAGAGTNNTAASVEMARASAEAGADALLVVTPYYSKPSQEGIYQHFRTVSEATDLPICAYDIPPRSVVPIAPDTLCRLAALPMIKAVKDAKGDITAATTLIAETGLAWYSGDDPLNLPWLSVGATGFISVIGHLAPQLLREMYTNFNQGNLEKAREINAQLAPLVAAQARLGGVSLAKAGLRLQGIEVGDPRLPIVAPSESEIEDLRRDMNKTGVL.

Residue threonine 57 participates in pyruvate binding. Tyrosine 145 acts as the Proton donor/acceptor in catalysis. The active-site Schiff-base intermediate with substrate is the lysine 173. Isoleucine 213 contacts pyruvate.

Belongs to the DapA family. Homotetramer; dimer of dimers.

It is found in the cytoplasm. The catalysed reaction is L-aspartate 4-semialdehyde + pyruvate = (2S,4S)-4-hydroxy-2,3,4,5-tetrahydrodipicolinate + H2O + H(+). Its pathway is amino-acid biosynthesis; L-lysine biosynthesis via DAP pathway; (S)-tetrahydrodipicolinate from L-aspartate: step 3/4. Catalyzes the condensation of (S)-aspartate-beta-semialdehyde [(S)-ASA] and pyruvate to 4-hydroxy-tetrahydrodipicolinate (HTPA). This is 4-hydroxy-tetrahydrodipicolinate synthase from Corynebacterium diphtheriae (strain ATCC 700971 / NCTC 13129 / Biotype gravis).